We begin with the raw amino-acid sequence, 266 residues long: Ras-like protein family member 12 (266 aa).

Residues 27–34 (GRRGAGKS), 74–78 (DTADL), and 134–137 (NKLD) contribute to the GTP site.

Belongs to the small GTPase superfamily. Ras family.

It carries out the reaction GTP + H2O = GDP + phosphate + H(+). The protein is Ras-like protein family member 12 (RASL12) of Bos taurus (Bovine).